The primary structure comprises 255 residues: F-box only protein 44 (255 aa).

The F-box domain occupies 3 to 50; the sequence is VGNINELPENILLELFIHIPARQLLLRCRPVCSLWRDLIDLVTLWKRK. Residues 71–252 form the FBA domain; it reads FYFLRSLQRN…VTNSSITIGP (182 aa).

Part of a SCF (SKP1-cullin-F-box) protein ligase complex. Interacts with SKP1 and CUL1. Expressed in brain, liver, pancreas and adipose tissue (at protein level). Widely expressed.

In terms of biological role, substrate-recognition component of the SCF (SKP1-CUL1-F-box protein)-type E3 ubiquitin ligase complex. The chain is F-box only protein 44 (Fbxo44) from Mus musculus (Mouse).